Reading from the N-terminus, the 383-residue chain is Succinyl-diaminopimelate desuccinylase (383 aa).

Residue His-73 participates in Zn(2+) binding. Asp-75 is a catalytic residue. Asp-107 contributes to the Zn(2+) binding site. Catalysis depends on Glu-141, which acts as the Proton acceptor. Residues Glu-142, Glu-170, and His-356 each contribute to the Zn(2+) site.

Belongs to the peptidase M20A family. DapE subfamily. In terms of assembly, homodimer. Zn(2+) serves as cofactor. Requires Co(2+) as cofactor.

It carries out the reaction N-succinyl-(2S,6S)-2,6-diaminopimelate + H2O = (2S,6S)-2,6-diaminopimelate + succinate. It participates in amino-acid biosynthesis; L-lysine biosynthesis via DAP pathway; LL-2,6-diaminopimelate from (S)-tetrahydrodipicolinate (succinylase route): step 3/3. Functionally, catalyzes the hydrolysis of N-succinyl-L,L-diaminopimelic acid (SDAP), forming succinate and LL-2,6-diaminopimelate (DAP), an intermediate involved in the bacterial biosynthesis of lysine and meso-diaminopimelic acid, an essential component of bacterial cell walls. The sequence is that of Succinyl-diaminopimelate desuccinylase from Pseudomonas aeruginosa (strain UCBPP-PA14).